The sequence spans 379 residues: tRNA(Met) cytidine acetate ligase (379 aa).

ATP-binding positions include 7–20, G100, N153, and R178; that span reads ITEYNPFHNGHQYH.

Belongs to the TmcAL family.

The protein localises to the cytoplasm. It carries out the reaction cytidine(34) in elongator tRNA(Met) + acetate + ATP = N(4)-acetylcytidine(34) in elongator tRNA(Met) + AMP + diphosphate. Functionally, catalyzes the formation of N(4)-acetylcytidine (ac(4)C) at the wobble position of elongator tRNA(Met), using acetate and ATP as substrates. First activates an acetate ion to form acetyladenylate (Ac-AMP) and then transfers the acetyl group to tRNA to form ac(4)C34. The sequence is that of tRNA(Met) cytidine acetate ligase from Staphylococcus aureus (strain MRSA252).